The following is a 72-amino-acid chain: MGKQPVKLKAVVYAISPFQQKIMPGLWKDLPGKIHHKVSENWISATLLLGPLVGTYSYVQHFLEKEKLEHRY.

Residues Gly2–Asn41 lie on the Mitochondrial matrix side of the membrane. The helical transmembrane segment at Trp42–Val59 threads the bilayer. Residues Gln60–Tyr72 are Mitochondrial intermembrane-facing.

The protein belongs to the UQCRQ/QCR8 family. Component of the ubiquinol-cytochrome c oxidoreductase (cytochrome b-c1 complex, complex III, CIII), a multisubunit enzyme composed of 3 respiratory subunits cytochrome b, cytochrome c1 and Rieske protein, 2 core protein subunits, and additional low-molecular weight protein subunits. The complex exists as an obligatory dimer and forms supercomplexes (SCs) in the inner mitochondrial membrane with cytochrome c oxidase (complex IV, CIV).

Its subcellular location is the mitochondrion inner membrane. Functionally, component of the ubiquinol-cytochrome c oxidoreductase, a multisubunit transmembrane complex that is part of the mitochondrial electron transport chain which drives oxidative phosphorylation. The respiratory chain contains 3 multisubunit complexes succinate dehydrogenase (complex II, CII), ubiquinol-cytochrome c oxidoreductase (cytochrome b-c1 complex, complex III, CIII) and cytochrome c oxidase (complex IV, CIV), that cooperate to transfer electrons derived from NADH and succinate to molecular oxygen, creating an electrochemical gradient over the inner membrane that drives transmembrane transport and the ATP synthase. The cytochrome b-c1 complex catalyzes electron transfer from ubiquinol to cytochrome c, linking this redox reaction to translocation of protons across the mitochondrial inner membrane, with protons being carried across the membrane as hydrogens on the quinol. In the process called Q cycle, 2 protons are consumed from the matrix, 4 protons are released into the intermembrane space and 2 electrons are passed to cytochrome c. This is Cytochrome b-c1 complex subunit 8 from Solanum tuberosum (Potato).